Consider the following 433-residue polypeptide: Glutamyl-tRNA reductase (433 aa).

Residues 49 to 52 (TCNR), S114, 119 to 121 (EPQ), and Q125 each bind substrate. C50 (nucleophile) is an active-site residue. Residue 201 to 206 (GAGETI) coordinates NADP(+).

This sequence belongs to the glutamyl-tRNA reductase family. In terms of assembly, homodimer.

The enzyme catalyses (S)-4-amino-5-oxopentanoate + tRNA(Glu) + NADP(+) = L-glutamyl-tRNA(Glu) + NADPH + H(+). The protein operates within porphyrin-containing compound metabolism; protoporphyrin-IX biosynthesis; 5-aminolevulinate from L-glutamyl-tRNA(Glu): step 1/2. Its function is as follows. Catalyzes the NADPH-dependent reduction of glutamyl-tRNA(Glu) to glutamate 1-semialdehyde (GSA). The protein is Glutamyl-tRNA reductase of Histophilus somni (strain 2336) (Haemophilus somnus).